Here is a 447-residue protein sequence, read N- to C-terminus: Probable glycosyltransferase 7 (447 aa).

A disordered region spans residues 1–31; the sequence is MRATTGARHLHPPWRRGLRHHRQSTMPPRAS. Residues 1–37 are Cytoplasmic-facing; the sequence is MRATTGARHLHPPWRRGLRHHRQSTMPPRASRGRLAD. The span at 8 to 23 shows a compositional bias: basic residues; that stretch reads RHLHPPWRRGLRHHRQ. Residues 38–60 form a helical; Signal-anchor for type II membrane protein membrane-spanning segment; the sequence is AALFTAGAVLGSVLLLTLASPFS. Topologically, residues 61–447 are lumenal; sequence SSSSPSSGVG…LPFDHPTQTA (387 aa). Asn-285 and Asn-329 each carry an N-linked (GlcNAc...) asparagine glycan.

This sequence belongs to the glycosyltransferase 34 family.

It localises to the golgi apparatus membrane. Probable glycosyltransferase that may be involved in the biosynthesis of xyloglucan. The polypeptide is Probable glycosyltransferase 7 (Oryza sativa subsp. indica (Rice)).